Consider the following 484-residue polypeptide: Glutamate--tRNA ligase (484 aa).

A 'HIGH' region motif is present at residues 12–22 (PSPTGEPHVGT). Positions 253–257 (KLSKR) match the 'KMSKS' region motif. An ATP-binding site is contributed by Lys256.

This sequence belongs to the class-I aminoacyl-tRNA synthetase family. Glutamate--tRNA ligase type 1 subfamily. Monomer.

Its subcellular location is the cytoplasm. The enzyme catalyses tRNA(Glu) + L-glutamate + ATP = L-glutamyl-tRNA(Glu) + AMP + diphosphate. In terms of biological role, catalyzes the attachment of glutamate to tRNA(Glu) in a two-step reaction: glutamate is first activated by ATP to form Glu-AMP and then transferred to the acceptor end of tRNA(Glu). The sequence is that of Glutamate--tRNA ligase from Rhizobium etli (strain CIAT 652).